Consider the following 202-residue polypeptide: Adenosylcobalamin/alpha-ribazole phosphatase (202 aa).

H8 acts as the Tele-phosphohistidine intermediate in catalysis. The active-site Proton donor/acceptor is E81.

This sequence belongs to the phosphoglycerate mutase family. Monomer.

The enzyme catalyses adenosylcob(III)alamin 5'-phosphate + H2O = adenosylcob(III)alamin + phosphate. It catalyses the reaction alpha-ribazole 5'-phosphate + H2O = alpha-ribazole + phosphate. It participates in nucleoside biosynthesis; alpha-ribazole biosynthesis; alpha-ribazole from 5,6-dimethylbenzimidazole: step 2/2. Catalyzes the conversion of adenosylcobalamin 5'-phosphate to adenosylcobalamin (vitamin B12); involved in the assembly of the nucleotide loop of cobalamin. Also catalyzes the hydrolysis of the phospho group from alpha-ribazole 5'-phosphate to form alpha-ribazole. The chain is Adenosylcobalamin/alpha-ribazole phosphatase (cobC) from Salmonella typhimurium (strain LT2 / SGSC1412 / ATCC 700720).